A 308-amino-acid chain; its full sequence is ATP synthase gamma chain (308 aa).

It belongs to the ATPase gamma chain family. F-type ATPases have 2 components, CF(1) - the catalytic core - and CF(0) - the membrane proton channel. CF(1) has five subunits: alpha(3), beta(3), gamma(1), delta(1), epsilon(1). CF(0) has three main subunits: a, b and c.

It localises to the cell membrane. In terms of biological role, produces ATP from ADP in the presence of a proton gradient across the membrane. The gamma chain is believed to be important in regulating ATPase activity and the flow of protons through the CF(0) complex. The chain is ATP synthase gamma chain from Lacticaseibacillus casei (strain BL23) (Lactobacillus casei).